The primary structure comprises 834 residues: Periplasmic nitrate reductase (834 aa).

A signal peptide (tat-type signal) is located at residues 1 to 29 (MSLTRRQFAKANAAAIAATVAGMPIASTA). Residues 41 to 97 (LKWDKAPCRFCGTGCGVMVATRENRVVATHGDVKADVNRGINCVKGYFLSKIMYGTD) form the 4Fe-4S Mo/W bis-MGD-type domain. 4 residues coordinate [4Fe-4S] cluster: cysteine 48, cysteine 51, cysteine 55, and cysteine 83. Mo-bis(molybdopterin guanine dinucleotide) contacts are provided by residues lysine 85, glutamine 152, asparagine 177, cysteine 181, 214–221 (WGSNMAEM), 245–249 (STFEH), 264–266 (QTD), methionine 375, glutamine 379, asparagine 485, 511–512 (SD), lysine 534, aspartate 561, and 721–730 (TGRVLEHWHT). Phenylalanine 797 contacts substrate. Positions 805 and 822 each coordinate Mo-bis(molybdopterin guanine dinucleotide).

It belongs to the prokaryotic molybdopterin-containing oxidoreductase family. NasA/NapA/NarB subfamily. As to quaternary structure, component of the periplasmic nitrate reductase NapAB complex composed of NapA and NapB. [4Fe-4S] cluster serves as cofactor. Requires Mo-bis(molybdopterin guanine dinucleotide) as cofactor. Post-translationally, predicted to be exported by the Tat system. The position of the signal peptide cleavage has not been experimentally proven.

It localises to the periplasm. It catalyses the reaction 2 Fe(II)-[cytochrome] + nitrate + 2 H(+) = 2 Fe(III)-[cytochrome] + nitrite + H2O. Catalytic subunit of the periplasmic nitrate reductase complex NapAB. Receives electrons from NapB and catalyzes the reduction of nitrate to nitrite. The polypeptide is Periplasmic nitrate reductase (Stutzerimonas stutzeri (Pseudomonas stutzeri)).